The sequence spans 383 residues: uncharacterized protein (383 aa).

It belongs to the peptidase M20 family.

This is an uncharacterized protein from Staphylococcus aureus (strain MRSA252).